The sequence spans 283 residues: Probable endonuclease 4 (283 aa).

Zn(2+) is bound by residues histidine 69, histidine 109, glutamate 145, aspartate 179, histidine 182, histidine 216, aspartate 229, histidine 231, and glutamate 261.

Belongs to the AP endonuclease 2 family. Zn(2+) serves as cofactor.

It catalyses the reaction Endonucleolytic cleavage to 5'-phosphooligonucleotide end-products.. Its function is as follows. Endonuclease IV plays a role in DNA repair. It cleaves phosphodiester bonds at apurinic or apyrimidinic (AP) sites, generating a 3'-hydroxyl group and a 5'-terminal sugar phosphate. The sequence is that of Probable endonuclease 4 from Prosthecochloris aestuarii (strain DSM 271 / SK 413).